A 517-amino-acid chain; its full sequence is Crotonobetaine/carnitine--CoA ligase (517 aa).

The protein belongs to the ATP-dependent AMP-binding enzyme family.

The enzyme catalyses 4-(trimethylamino)butanoate + ATP + CoA = 4-(trimethylamino)butanoyl-CoA + AMP + diphosphate. The catalysed reaction is crotonobetaine + ATP + CoA = crotonobetainyl-CoA + AMP + diphosphate. It carries out the reaction (R)-carnitine + ATP + CoA = (R)-carnitinyl-CoA + AMP + diphosphate. Its pathway is amine and polyamine metabolism; carnitine metabolism. Catalyzes the transfer of CoA to carnitine, generating the initial carnitinyl-CoA needed for the CaiB reaction cycle. Also has activity toward crotonobetaine and gamma-butyrobetaine. In Salmonella paratyphi A (strain ATCC 9150 / SARB42), this protein is Crotonobetaine/carnitine--CoA ligase.